The sequence spans 65 residues: MRCLPVFIILLLLIPSAPSVDAQRKTKDDVPLASFHDNAKRTLKRLWNKRSCCPQEFLCCLYLVK.

An N-terminal signal peptide occupies residues 1–19 (MRCLPVFIILLLLIPSAPS). The propeptide occupies 20-48 (VDAQRKTKDDVPLASFHDNAKRTLKRLWN).

Belongs to the conotoxin T superfamily. In terms of processing, contains 2 disulfide bonds that can be either 'C1-C3, C2-C4' or 'C1-C4, C2-C3', since these disulfide connectivities have been observed for conotoxins with cysteine framework V (for examples, see AC P0DQQ7 and AC P81755). In terms of tissue distribution, expressed by the venom duct.

It is found in the secreted. This chain is Conotoxin Lt5.1, found in Conus litteratus (Lettered cone).